A 174-amino-acid polypeptide reads, in one-letter code: NADH-quinone oxidoreductase subunit B 1 (174 aa).

Cys38, Cys39, Cys104, and Cys133 together coordinate [4Fe-4S] cluster.

The protein belongs to the complex I 20 kDa subunit family. NDH-1 is composed of 14 different subunits. Subunits NuoB, C, D, E, F, and G constitute the peripheral sector of the complex. Requires [4Fe-4S] cluster as cofactor.

It is found in the cell membrane. The enzyme catalyses a quinone + NADH + 5 H(+)(in) = a quinol + NAD(+) + 4 H(+)(out). Functionally, NDH-1 shuttles electrons from NADH, via FMN and iron-sulfur (Fe-S) centers, to quinones in the respiratory chain. The immediate electron acceptor for the enzyme in this species is believed to be ubiquinone. Couples the redox reaction to proton translocation (for every two electrons transferred, four hydrogen ions are translocated across the cytoplasmic membrane), and thus conserves the redox energy in a proton gradient. This chain is NADH-quinone oxidoreductase subunit B 1, found in Chloroflexus aggregans (strain MD-66 / DSM 9485).